The sequence spans 123 residues: Large ribosomal subunit protein eL8 (123 aa).

This sequence belongs to the eukaryotic ribosomal protein eL8 family. As to quaternary structure, part of the 50S ribosomal subunit. Probably part of the RNase P complex.

Its subcellular location is the cytoplasm. Its function is as follows. Multifunctional RNA-binding protein that recognizes the K-turn motif in ribosomal RNA, the RNA component of RNase P, box H/ACA, box C/D and box C'/D' sRNAs. The sequence is that of Large ribosomal subunit protein eL8 from Methanothermobacter thermautotrophicus (strain ATCC 29096 / DSM 1053 / JCM 10044 / NBRC 100330 / Delta H) (Methanobacterium thermoautotrophicum).